The primary structure comprises 634 residues: UPF0313 protein PG_0934 (634 aa).

A Radical SAM core domain is found at 302 to 582 (AYEMIKHSVN…RQHMFFFWYK (281 aa)). Cysteine 316, cysteine 320, and cysteine 323 together coordinate [4Fe-4S] cluster. The interval 607–634 (DRTTSSRNDRHTPPSTQPRKSKSKSRHS) is disordered. Over residues 625-634 (RKSKSKSRHS) the composition is skewed to basic residues.

Belongs to the UPF0313 family. The cofactor is [4Fe-4S] cluster.

This Porphyromonas gingivalis (strain ATCC BAA-308 / W83) protein is UPF0313 protein PG_0934.